The chain runs to 292 residues: Aspartate carbamoyltransferase catalytic subunit (292 aa).

Residues Arg-49 and Thr-50 each contribute to the carbamoyl phosphate site. Lys-77 is an L-aspartate binding site. Residues Arg-99, His-127, and Gln-130 each contribute to the carbamoyl phosphate site. L-aspartate contacts are provided by Arg-161 and Arg-211. Positions 250 and 251 each coordinate carbamoyl phosphate.

This sequence belongs to the aspartate/ornithine carbamoyltransferase superfamily. ATCase family. Heterododecamer (2C3:3R2) of six catalytic PyrB chains organized as two trimers (C3), and six regulatory PyrI chains organized as three dimers (R2).

It catalyses the reaction carbamoyl phosphate + L-aspartate = N-carbamoyl-L-aspartate + phosphate + H(+). It participates in pyrimidine metabolism; UMP biosynthesis via de novo pathway; (S)-dihydroorotate from bicarbonate: step 2/3. Catalyzes the condensation of carbamoyl phosphate and aspartate to form carbamoyl aspartate and inorganic phosphate, the committed step in the de novo pyrimidine nucleotide biosynthesis pathway. The protein is Aspartate carbamoyltransferase catalytic subunit of Campylobacter lari (strain RM2100 / D67 / ATCC BAA-1060).